Consider the following 108-residue polypeptide: Large ribosomal subunit protein bL31B (108 aa).

Residues 86–108 (KPETVVEDVLPKGKKKSPAKKKK) are disordered. A compositionally biased stretch (basic residues) spans 97-108 (KGKKKSPAKKKK).

It belongs to the bacterial ribosomal protein bL31 family. Type B subfamily. As to quaternary structure, part of the 50S ribosomal subunit.

This is Large ribosomal subunit protein bL31B from Chlamydia trachomatis serovar L2 (strain ATCC VR-902B / DSM 19102 / 434/Bu).